We begin with the raw amino-acid sequence, 103 residues long: Large ribosomal subunit protein uL24 (103 aa).

The protein belongs to the universal ribosomal protein uL24 family. In terms of assembly, part of the 50S ribosomal subunit.

In terms of biological role, one of two assembly initiator proteins, it binds directly to the 5'-end of the 23S rRNA, where it nucleates assembly of the 50S subunit. Functionally, one of the proteins that surrounds the polypeptide exit tunnel on the outside of the subunit. This is Large ribosomal subunit protein uL24 from Geobacillus sp. (strain WCH70).